Consider the following 563-residue polypeptide: Kdo(2)-lipid A phosphoethanolamine 7''-transferase (563 aa).

Over methionine 1–glutamine 9 the chain is Cytoplasmic. A helical membrane pass occupies residues glutamine 10–tyrosine 30. Topologically, residues arginine 31 to alanine 48 are periplasmic. The chain crosses the membrane as a helical span at residues valine 49–phenylalanine 69. Residues glycine 70–serine 79 lie on the Cytoplasmic side of the membrane. A helical membrane pass occupies residues leucine 80–glycine 100. Residues tyrosine 101–glutamate 117 lie on the Periplasmic side of the membrane. Residues valine 118–isoleucine 138 traverse the membrane as a helical segment. Residues tryptophan 139 to arginine 159 lie on the Cytoplasmic side of the membrane. The chain crosses the membrane as a helical span at residues serine 160–isoleucine 180. The Periplasmic portion of the chain corresponds to glutamine 181–asparagine 563.

It belongs to the phosphoethanolamine transferase family. EptB subfamily. Ca(2+) is required as a cofactor.

It localises to the cell inner membrane. It catalyses the reaction alpha-Kdo-(2-&gt;4)-alpha-Kdo-(2-&gt;6)-lipid A (E. coli) + a 1,2-diacyl-sn-glycero-3-phosphoethanolamine = 7-O-[2-aminoethoxy(hydroxy)phosphoryl]-alpha-Kdo-(2-&gt;4)-alpha-Kdo-(2-&gt;6)-lipid A + a 1,2-diacyl-sn-glycerol. The enzyme catalyses alpha-Kdo-(2-&gt;4)-alpha-Kdo-(2-&gt;6)-lipid IVA (E. coli) + a 1,2-diacyl-sn-glycero-3-phosphoethanolamine = 7-O-[2-aminoethoxy(hydroxy)phosphoryl]-alpha-Kdo-(2-&gt;4)-alpha-Kdo-(2-&gt;6)-lipid IVA (E. coli) + a 1,2-diacyl-sn-glycerol. Inhibited by calcium concentrations higher than 1 mM. Its function is as follows. Catalyzes the addition of a phosphoethanolamine (pEtN) moiety to the outer 3-deoxy-D-manno-octulosonic acid (Kdo) residue of a Kdo(2)-lipid A. Phosphatidylethanolamines with one unsaturated acyl group function as pEtN donors and the reaction releases diacylglycerol. The protein is Kdo(2)-lipid A phosphoethanolamine 7''-transferase (eptB) of Escherichia coli (strain K12).